The following is a 443-amino-acid chain: MSPVHYRTSTSTIVAVLKLYRFLDDRDALFRQIGRSVDFDPEVQRAVTDILEAVRLRGDMAVLEYTERFQGAVLTSMQVPEEDILRAREEADPAFIRVLEEAWENILRFHRHEVENSFFYEGEGGVVLGQRVTPMDRAMLYVPGGKASYPSSVLMNAAPARVAGVGEIFMTTPCDASGAVSPHILAAASVAGVTSVYRLGGAQAVAAFAYGTQTIPKVDIITGPGNKYVALAKKQVFGHVAIDSIAGPSEVVVVADDDADAEFITMDLFAQAEHDPDASSVLITPSMRLAEEVRDLAAARVGSMLRGEVIAEALSNNGAIVVVADIEEACRVSDMIAPEHLELHVLHPWELLASIRHAGAVFMGGYSCETVGDYYAGPNHTLPTNGTARFFSPLSVRDFVKHTSIISYTRRQIMACGERIASFADHEGLEAHAEAVRARLKKG.

NAD(+) contacts are provided by Y141, Q203, and N226. S249, Q271, and H274 together coordinate substrate. Zn(2+)-binding residues include Q271 and H274. Residues E339 and H340 each act as proton acceptor in the active site. 4 residues coordinate substrate: H340, D373, E427, and H432. D373 contributes to the Zn(2+) binding site. H432 is a binding site for Zn(2+).

This sequence belongs to the histidinol dehydrogenase family. Zn(2+) is required as a cofactor.

It carries out the reaction L-histidinol + 2 NAD(+) + H2O = L-histidine + 2 NADH + 3 H(+). It functions in the pathway amino-acid biosynthesis; L-histidine biosynthesis; L-histidine from 5-phospho-alpha-D-ribose 1-diphosphate: step 9/9. Its function is as follows. Catalyzes the sequential NAD-dependent oxidations of L-histidinol to L-histidinaldehyde and then to L-histidine. This Chlorobium luteolum (strain DSM 273 / BCRC 81028 / 2530) (Pelodictyon luteolum) protein is Histidinol dehydrogenase.